A 32-amino-acid chain; its full sequence is Cytochrome b6-f complex subunit 7 (32 aa).

Residues 9 to 27 (AALFWVLIPLGLAGGALLL) traverse the membrane as a helical segment.

The protein belongs to the PetM family. As to quaternary structure, the 4 large subunits of the cytochrome b6-f complex are cytochrome b6, subunit IV (17 kDa polypeptide, PetD), cytochrome f and the Rieske protein, while the 4 small subunits are PetG, PetL, PetM and PetN. The complex functions as a dimer.

The protein resides in the cellular thylakoid membrane. Component of the cytochrome b6-f complex, which mediates electron transfer between photosystem II (PSII) and photosystem I (PSI), cyclic electron flow around PSI, and state transitions. This Synechococcus sp. (strain RCC307) protein is Cytochrome b6-f complex subunit 7.